Consider the following 294-residue polypeptide: Early 4 ORF6 protein (294 aa).

The Nuclear localization signal signature appears at 239 to 255; it reads ARRTRRLMLRAVRIIAE.

It belongs to the adenoviridae E4 30 to 34 kDa protein family. Interacts with E1B-55k.

It is found in the host nucleus. Its subcellular location is the host cytoplasm. Functionally, plays a major role to prevent cellular inhibition of viral genome replication by nuclear bodies. Assembles an SCF-like E3 ubiquitin ligase complex based on the cellular proteins ELOB, ELOC, CUL5 and RBX1, in cooperation with viral E1B-55K. This viral RING-type ligase ubiquitinates cellular substrates prior to proteasomal degradation: p53/TP53, LIG4, MRE11-RAD50-NBS1 (MRN) complex, ITGA3, DAXX and BLM. This Homo sapiens (Human) protein is Early 4 ORF6 protein.